Consider the following 571-residue polypeptide: Pectinesterase/pectinesterase inhibitor (571 aa).

Positions Asn-27–Ile-178 are pectinesterase inhibitor. A disordered region spans residues Ala-233–Gly-254. The tract at residues Thr-259–Asn-558 is pectinesterase. Substrate contacts are provided by Thr-336 and Gln-366. Asp-389 serves as the catalytic Proton donor; for pectinesterase activity. Asp-410 acts as the Nucleophile; for pectinesterase activity in catalysis. Arg-479 and Trp-481 together coordinate substrate.

The protein in the N-terminal section; belongs to the PMEI family. In the C-terminal section; belongs to the pectinesterase family.

It localises to the secreted. The protein resides in the cell wall. It carries out the reaction [(1-&gt;4)-alpha-D-galacturonosyl methyl ester](n) + n H2O = [(1-&gt;4)-alpha-D-galacturonosyl](n) + n methanol + n H(+). It participates in glycan metabolism; pectin degradation; 2-dehydro-3-deoxy-D-gluconate from pectin: step 1/5. In terms of biological role, acts in the modification of cell walls via demethylesterification of cell wall pectin. This chain is Pectinesterase/pectinesterase inhibitor, found in Brassica campestris (Field mustard).